A 157-amino-acid chain; its full sequence is ABA-responsive protein ABR17 (157 aa).

This sequence belongs to the BetVI family.

The sequence is that of ABA-responsive protein ABR17 from Pisum sativum (Garden pea).